The chain runs to 188 residues: ATP synthase subunit b (188 aa).

The helical transmembrane segment at 19–39 (VYVLGATIVSFLILFLFITYF) threads the bilayer.

It belongs to the ATPase B chain family. In terms of assembly, F-type ATPases have 2 components, F(1) - the catalytic core - and F(0) - the membrane proton channel. F(1) has five subunits: alpha(3), beta(3), gamma(1), delta(1), epsilon(1). F(0) has three main subunits: a(1), b(2) and c(10-14). The alpha and beta chains form an alternating ring which encloses part of the gamma chain. F(1) is attached to F(0) by a central stalk formed by the gamma and epsilon chains, while a peripheral stalk is formed by the delta and b chains.

Its subcellular location is the cell membrane. F(1)F(0) ATP synthase produces ATP from ADP in the presence of a proton or sodium gradient. F-type ATPases consist of two structural domains, F(1) containing the extramembraneous catalytic core and F(0) containing the membrane proton channel, linked together by a central stalk and a peripheral stalk. During catalysis, ATP synthesis in the catalytic domain of F(1) is coupled via a rotary mechanism of the central stalk subunits to proton translocation. In terms of biological role, component of the F(0) channel, it forms part of the peripheral stalk, linking F(1) to F(0). This is ATP synthase subunit b from Mesomycoplasma hyopneumoniae (strain J / ATCC 25934 / NCTC 10110) (Mycoplasma hyopneumoniae).